The sequence spans 452 residues: MGRRYFGTDGIRGKVGDAPITPDFVLRLGYAAGKVLASAPGRAASGARPTVLIGKDTRVSGYMLEAALEAGFSAAGVDVMLAGPMPTPGVAYLTRALRLSAGVVISASHNPYHDNGIKFFSADGNKLPDEIEAEIEAWLDKPLDCAASDGLGKARRLDDAAGRYIEFCKSTFPAAFDLRGMKLVVDCAHGAAYQVAPHVFHELGADVIPIGVAPNGFNINDGVGATAPDALMRAVRANHADLGIALDGDADRLLVVDHTGRLYNGDELLYVLVKDRIATNGQVEGAVGTLMTNFAVEVALKEAGVQFVRAAVGDRYVLEQLREHGWQLGAEGSGHILSLDRHSTGDGIVSALLVLAALKRSGKTLAQMLEGVTLFPQKLINVRMKPGADWKGSDAIRRAIDSAEQALSGSGRVLIRASGTEPVLRVMVEARQATDANRHAEAIADAVKQATA.

The Phosphoserine intermediate role is filled by Ser108. Mg(2+) contacts are provided by Ser108, Asp247, Asp249, and Asp251. Ser108 bears the Phosphoserine mark.

It belongs to the phosphohexose mutase family. Mg(2+) serves as cofactor. Post-translationally, activated by phosphorylation.

The enzyme catalyses alpha-D-glucosamine 1-phosphate = D-glucosamine 6-phosphate. Catalyzes the conversion of glucosamine-6-phosphate to glucosamine-1-phosphate. This Burkholderia pseudomallei (strain K96243) protein is Phosphoglucosamine mutase.